The sequence spans 119 residues: Non-specific lipid-transfer protein 12 (119 aa).

Residues 1–24 (MAFTPKIITCLIVLTIYMASPTES) form the signal peptide. 4 disulfides stabilise this stretch: cysteine 28/cysteine 75, cysteine 38/cysteine 52, cysteine 53/cysteine 98, and cysteine 73/cysteine 112.

It belongs to the plant LTP family.

Functionally, plant non-specific lipid-transfer proteins transfer phospholipids as well as galactolipids across membranes. May play a role in wax or cutin deposition in the cell walls of expanding epidermal cells and certain secretory tissues. The sequence is that of Non-specific lipid-transfer protein 12 (LTP12) from Arabidopsis thaliana (Mouse-ear cress).